The sequence spans 338 residues: Tetraacyldisaccharide 4'-kinase (338 aa).

An ATP-binding site is contributed by Thr49–Thr56.

The protein belongs to the LpxK family.

The enzyme catalyses a lipid A disaccharide + ATP = a lipid IVA + ADP + H(+). The protein operates within glycolipid biosynthesis; lipid IV(A) biosynthesis; lipid IV(A) from (3R)-3-hydroxytetradecanoyl-[acyl-carrier-protein] and UDP-N-acetyl-alpha-D-glucosamine: step 6/6. In terms of biological role, transfers the gamma-phosphate of ATP to the 4'-position of a tetraacyldisaccharide 1-phosphate intermediate (termed DS-1-P) to form tetraacyldisaccharide 1,4'-bis-phosphate (lipid IVA). This chain is Tetraacyldisaccharide 4'-kinase, found in Geobacter metallireducens (strain ATCC 53774 / DSM 7210 / GS-15).